A 92-amino-acid chain; its full sequence is Bombyxin A-6 (92 aa).

The first 19 residues, 1–19 (MKILLAIALMLSTVMWVST), serve as a signal peptide directing secretion. Gln-20 carries the post-translational modification Pyrrolidone carboxylic acid. 3 disulfide bridges follow: Cys-29–Cys-79, Cys-41–Cys-92, and Cys-78–Cys-83. Residues 50–70 (SGAQFASYGSAWLMPYSEGRG) constitute a propeptide, c peptide like.

Belongs to the insulin family. In terms of assembly, heterodimer of a B chain and an A chain linked by two disulfide bonds.

The protein localises to the secreted. Brain peptide responsible for activation of prothoracic glands to produce ecdysone in insects. This chain is Bombyxin A-6 (BBXA6), found in Bombyx mori (Silk moth).